The sequence spans 77 residues: Translation initiation factor IF-1, chloroplastic (77 aa).

An S1-like domain is found at 1-71; sequence MKEQKWIHEG…SRGRIIYRLR (71 aa).

It belongs to the IF-1 family. Component of the 30S ribosomal translation pre-initiation complex which assembles on the 30S ribosome in the order IF-2 and IF-3, IF-1 and N-formylmethionyl-tRNA(fMet); mRNA recruitment can occur at any time during PIC assembly.

The protein resides in the plastid. It localises to the chloroplast. In terms of biological role, one of the essential components for the initiation of protein synthesis. Stabilizes the binding of IF-2 and IF-3 on the 30S subunit to which N-formylmethionyl-tRNA(fMet) subsequently binds. Helps modulate mRNA selection, yielding the 30S pre-initiation complex (PIC). Upon addition of the 50S ribosomal subunit IF-1, IF-2 and IF-3 are released leaving the mature 70S translation initiation complex. The protein is Translation initiation factor IF-1, chloroplastic of Buxus microphylla (Littleleaf boxwood).